Here is a 51-residue protein sequence, read N- to C-terminus: Insulin (51 aa).

Cystine bridges form between Cys8–Cys37, Cys20–Cys50, and Cys36–Cys41.

The protein belongs to the insulin family. Heterodimer of a B chain and an A chain linked by two disulfide bonds.

The protein resides in the secreted. Functionally, insulin decreases blood glucose concentration. It increases cell permeability to monosaccharides, amino acids and fatty acids. It accelerates glycolysis, the pentose phosphate cycle, and glycogen synthesis in liver. This chain is Insulin (ins), found in Gadus morhua subsp. callarias (Baltic cod).